A 499-amino-acid polypeptide reads, in one-letter code: Myocyte-specific enhancer factor 2A (499 aa).

Positions 3-57 (RKKIQITRIMDERNRQVTFTKRKFGLMKKAYELSVLCDCEIALIIFNSSNKLFQY) constitute an MADS-box domain. K4 carries the N6-acetyllysine modification. The segment at residues 58-86 (ASTDMDKVLLKYTEYNEPHESRTNSDIVE) is a DNA-binding region (mef2-type). K117 carries the N6-acetyllysine modification. Positions 173–185 (TSTTMLSPPQTTL) are enriched in low complexity. A disordered region spans residues 173 to 269 (TSTTMLSPPQ…GGGLGMNNRK (97 aa)). Positions 210–233 (TDLTVPNGAGTSPVGNGVWNSRAS) are enriched in polar residues. K248, K253, K269, and K281 each carry N6-acetyllysine. Residues 265–282 (MNNRKPDLRVVIPPSSKG) are required for interaction with MAPKs. Residues 288 to 295 (TEEDELEL) form a beta domain region. Over residues 380-392 (VSGSQLSQGSNLS) the composition is skewed to low complexity. Positions 380–499 (VSGSQLSQGS…KRMRMDTWVT (120 aa)) are disordered. At K402 the chain carries N6-acetyllysine; alternate. K402 is covalently cross-linked (Glycyl lysine isopeptide (Lys-Gly) (interchain with G-Cter in SUMO); alternate). Pro residues predominate over residues 421–436 (QQPPQQPQPPQPPQQP). Over residues 445 to 458 (SPVDSLSSSSSSYD) the composition is skewed to low complexity. 2 stretches are compositionally biased toward basic and acidic residues: residues 459 to 469 (GSDREDPRSDF) and 480 to 499 (NSED…TWVT).

In terms of assembly, binds DNA as a homo- or heterodimer. Post-translationally, sumoylation on Lys-402 is enhanced by PIAS1 and represses transcriptional activity. Has no effect on nuclear location nor on DNA binding. Sumoylated by SUMO1 and, to a lesser extent by SUMO2 and SUMO3. Acetylation on Lys-402 activates transcriptional activity. Expressed in both embryonic and adult tissues with high expression in heart and skeletal muscle. Also expressed in gut, lung and brain of 15 dpc embryos and adults.

The protein localises to the nucleus. Functionally, transcriptional activator which binds specifically to the MEF2 element, 5'-YTA[AT](4)TAR-3', found in numerous muscle-specific genes. Mediates cellular functions in skeletal and cardiac muscle development,. This Gallus gallus (Chicken) protein is Myocyte-specific enhancer factor 2A (MEF2A).